A 501-amino-acid chain; its full sequence is MFDNILEQQRIEKAKELKNLGINPYPHFLEKEMSLKTFKDKFSYILEQVEKRDESVNAVVAGRLKLLRIAGKSIFANIEDEDTNLQIYFSKDSVGEELYTILKKNLEAGDIVLVKGFPFVTKTGEFSLHASEVKLATKAIVPLPEKYHGLTDIEQRYRKRYVDMIMNAEVRKDFLVRSKVVSLIRHFFENKGFLEVETPMMHPIAGGANAKPFVTFHNSLGVERFLRIAPELYLKRLVVGGFEAVFEINRCFRNEGMDLTHNPEFTTIEFYWAYHNYKDLMDLTEELFALLLDKLNLGKTIEFDGKMIDFSKPFERITYKDALCKYGGLDRDLIEDKEKILAKLKTDGFEANEKLELGHLQAELFDNYVEEKLINPTFVSDFPISISPLSRRSDENSQIAERFELFICGRELANGFNELNDPLDQYERFLKQIEAKNAGDEEACEMDEDFVNALGYGMPPTAGQGIGIDRLVMLLTNKKSIRDVILFPAMRPLKSELKEKE.

Mg(2+) is bound by residues E404 and E411.

The protein belongs to the class-II aminoacyl-tRNA synthetase family. In terms of assembly, homodimer. Mg(2+) serves as cofactor.

It is found in the cytoplasm. The catalysed reaction is tRNA(Lys) + L-lysine + ATP = L-lysyl-tRNA(Lys) + AMP + diphosphate. This is Lysine--tRNA ligase from Campylobacter jejuni subsp. doylei (strain ATCC BAA-1458 / RM4099 / 269.97).